Here is a 457-residue protein sequence, read N- to C-terminus: MTTSHQPQDRYKAVWLIFFVLGLGTLLPWNFFITATQYFTSRLNTSQNISLVTNQSCESTEALADPSVSLPARSSLSAIFNNVMTLCAMLPLLIFTCLNSFLHQKVSQSLRILGSLLAILLVFLVTATLVKVQMDALSFFIITMIKIVLINSFGAILQASLFGLAGVLPANYTAPIMSGQGLAGFFTSVAMICAVASGSKLSESAFGYFITACAVVILAILCYLALPWMEFYRHYLQLNLAGPAEQETKLDLISEGEEPRGGREESGVPGPNSLPANRNQSIKAILKSIWVLALSVCFIFTVTIGLFPAVTAEVESSIAGTSPWKNCYFIPVACFLNFNVFDWLGRSLTAICMWPGQDSRWLPVLVACRVVFIPLLMLCNVKQHHYLPSLFKHDVWFITFMAAFAFSNGYLASLCMCFGPKKVKPAEAETAGNIMSFFLCLGLALGAVLSFLLRALV.

Topologically, residues M1–K12 are cytoplasmic. The chain crosses the membrane as a helical span at residues A13–W29. The Extracellular segment spans residues N30–N82. N-linked (GlcNAc...) asparagine glycosylation is found at N44, N48, and N54. Residues V83–S107 traverse the membrane as a helical segment. Residues Q108 to R111 lie on the Cytoplasmic side of the membrane. Residues I112–V130 form a helical membrane-spanning segment. At K131–S138 the chain is on the extracellular side. Residues F139 to L157 traverse the membrane as a helical segment. Residues Q158–A174 are Cytoplasmic-facing. A helical membrane pass occupies residues P175–S199. Topologically, residues K200–F206 are extracellular. Residues G207–P227 form a helical membrane-spanning segment. At W228–V291 the chain is on the cytoplasmic side. A Phosphoserine modification is found at S254. Residues E255 to S266 are compositionally biased toward basic and acidic residues. The interval E255–P275 is disordered. The residue at position 273 (S273) is a Phosphoserine. The chain crosses the membrane as a helical span at residues L292 to T311. At A312–P323 the chain is on the extracellular side. A helical membrane pass occupies residues W324 to W343. The Cytoplasmic segment spans residues L344–R360. Residues W361–C379 traverse the membrane as a helical segment. The Extracellular portion of the chain corresponds to N380–D394. The helical transmembrane segment at V395 to L414 threads the bilayer. Residues C415 to G432 are Cytoplasmic-facing. Residues N433–L453 traverse the membrane as a helical segment. At R454–V457 the chain is on the extracellular side.

This sequence belongs to the SLC29A/ENT transporter (TC 2.A.57) family. In terms of assembly, identified in a complex with STOM. As to expression, expressed in jejunum, liver and lung. Expressed in testis at the blood-testis barrier (at protein level). Expressed in ventricular myocytes (at protein level). Expressed in kidney.

The protein resides in the basolateral cell membrane. It is found in the apical cell membrane. Its subcellular location is the cell membrane. The catalysed reaction is adenosine(in) = adenosine(out). The enzyme catalyses guanosine(in) = guanosine(out). It catalyses the reaction inosine(in) = inosine(out). It carries out the reaction uridine(out) = uridine(in). The catalysed reaction is thymidine(in) = thymidine(out). The enzyme catalyses cytidine(in) = cytidine(out). It catalyses the reaction adenine(out) = adenine(in). It carries out the reaction guanine(out) = guanine(in). The catalysed reaction is thymine(out) = thymine(in). The enzyme catalyses uracil(in) = uracil(out). It catalyses the reaction hypoxanthine(out) = hypoxanthine(in). Its activity is regulated as follows. Transport activity is sensitive to low concentrations of the inhibitor nitrobenzylmercaptopurine riboside (NBMPR). Uniporter involved in the facilitative transport of nucleosides and nucleobases, and contributes to maintaining their cellular homeostasis. Functions as a Na(+)-independent transporter. Involved in the transport of nucleosides such as adenosine, thymidine and uridine. Also transports purine nucleobases (hypoxanthine, adenine, guanine) and pyrimidine nucleobases (thymine, uracil). Mediates basolateral nucleoside uptake into Sertoli cells, thereby regulating the transport of nucleosides in testis across the blood-testis barrier. Regulates inosine levels in brown adipocytes tissues (BAT) and extracellular inosine levels, which controls BAT-dependent energy expenditure. The sequence is that of Equilibrative nucleoside transporter 1 from Rattus norvegicus (Rat).